The chain runs to 636 residues: 1-deoxy-D-xylulose-5-phosphate synthase (636 aa).

Residues histidine 77 and 118–120 (GHS) each bind thiamine diphosphate. Residue aspartate 149 participates in Mg(2+) binding. Thiamine diphosphate-binding positions include 150 to 151 (GA), asparagine 178, tyrosine 290, and glutamate 375. Asparagine 178 is a binding site for Mg(2+).

This sequence belongs to the transketolase family. DXPS subfamily. As to quaternary structure, homodimer. The cofactor is Mg(2+). Thiamine diphosphate is required as a cofactor.

The catalysed reaction is D-glyceraldehyde 3-phosphate + pyruvate + H(+) = 1-deoxy-D-xylulose 5-phosphate + CO2. It participates in metabolic intermediate biosynthesis; 1-deoxy-D-xylulose 5-phosphate biosynthesis; 1-deoxy-D-xylulose 5-phosphate from D-glyceraldehyde 3-phosphate and pyruvate: step 1/1. Its function is as follows. Catalyzes the acyloin condensation reaction between C atoms 2 and 3 of pyruvate and glyceraldehyde 3-phosphate to yield 1-deoxy-D-xylulose-5-phosphate (DXP). The chain is 1-deoxy-D-xylulose-5-phosphate synthase from Cytophaga hutchinsonii (strain ATCC 33406 / DSM 1761 / CIP 103989 / NBRC 15051 / NCIMB 9469 / D465).